Consider the following 139-residue polypeptide: uncharacterized protein (139 aa).

3 helical membrane-spanning segments follow: residues 38-60 (YFLH…LYVF), 72-94 (FIIL…CAGS), and 114-136 (ITVV…LIVA).

It is found in the cell membrane. This is an uncharacterized protein from Treponema pallidum (strain Nichols).